The primary structure comprises 289 residues: Thiosulfate sulfurtransferase (289 aa).

The 119-residue stretch at 24 to 142 (VGAGLRVLDA…WVKEGHPVTA (119 aa)) folds into the Rhodanese 1 domain. Residues 143–158 (EPSQPAEAVFKAKLDK) form a hinge region. The Rhodanese 2 domain occupies 172 to 284 (GSKKFQVVDS…WFHRAPPQYK (113 aa)). Arginine 186 lines the substrate pocket. The Cysteine persulfide intermediate role is filled by cysteine 244. Residue lysine 246 coordinates substrate.

In terms of assembly, monomer. Expressed in numerous tissues.

The protein localises to the mitochondrion matrix. It catalyses the reaction thiosulfate + hydrogen cyanide = thiocyanate + sulfite + 2 H(+). Its function is as follows. Together with MRPL18, acts as a mitochondrial import factor for the cytosolic 5S rRNA. Only the nascent unfolded cytoplasmic form is able to bind to the 5S rRNA. Formation of iron-sulfur complexes and cyanide detoxification. This chain is Thiosulfate sulfurtransferase (TST), found in Gallus gallus (Chicken).